Here is a 923-residue protein sequence, read N- to C-terminus: Probable ribosylation factor GTPase-activating protein cnt6 (923 aa).

Serine 207 carries the post-translational modification Phosphoserine. Residues 444 to 455 show a composition bias toward basic and acidic residues; the sequence is TTRRDKGREMHR. The disordered stretch occupies residues 444–476; sequence TTRRDKGREMHRSQVIQTSGRPKSMAPPSPSPI. One can recognise a PH domain in the interval 526–632; the sequence is KIFKEGLLLV…WIEAICEAAK (107 aa). One can recognise an Arf-GAP domain in the interval 714-837; that stretch reads NIFIQMLRKT…AFIDFAGVDA (124 aa). Residues 730–754 form a C4-type zinc finger; it reads CADCGSVKDVTWCSINIPVVLCIEC.

The protein localises to the cytoplasm. It is found in the cell tip. Its function is as follows. GTPase-activating protein for the ADP ribosylation factor family. The sequence is that of Probable ribosylation factor GTPase-activating protein cnt6 (cnt6) from Schizosaccharomyces pombe (strain 972 / ATCC 24843) (Fission yeast).